We begin with the raw amino-acid sequence, 166 residues long: P2Y purinoceptor 2 (166 aa).

Over Val1 to Arg24 the chain is Cytoplasmic. The helical transmembrane segment at Val25–Thr45 threads the bilayer. The Extracellular segment spans residues Thr46 to Ser72. The chain crosses the membrane as a helical span at residues Val73–Met93. The Cytoplasmic segment spans residues Ala94–Ser115. The helical transmembrane segment at Val116–Thr136 threads the bilayer. The Extracellular portion of the chain corresponds to Arg137 to Ala159. A helical transmembrane segment spans residues Tyr160–Leu166.

Belongs to the G-protein coupled receptor 1 family.

Its subcellular location is the cell membrane. Its function is as follows. Receptor for ATP and UTP coupled to G-proteins that activate a phosphatidylinositol-calcium second messenger system. This Cricetulus griseus (Chinese hamster) protein is P2Y purinoceptor 2 (P2RY2).